A 147-amino-acid polypeptide reads, in one-letter code: Lysozyme C (147 aa).

The signal sequence occupies residues 1–17 (MRSLLILVLCFLPLAAP). Residues 19 to 147 (KVYGRCELAA…VNVWIRGCRL (129 aa)) form the C-type lysozyme domain. Intrachain disulfides connect Cys-24–Cys-145, Cys-48–Cys-133, Cys-82–Cys-98, and Cys-94–Cys-112. Catalysis depends on residues Glu-53 and Asp-70.

The protein belongs to the glycosyl hydrolase 22 family. As to quaternary structure, monomer. Post-translationally, by an evolutionary shift in the site of proteolytic cleavage of prelysozyme, Gly-18 became the N-terminal residue of the mature protein instead of being the C-terminal residue of the signal sequence as in other birds.

It localises to the secreted. The catalysed reaction is Hydrolysis of (1-&gt;4)-beta-linkages between N-acetylmuramic acid and N-acetyl-D-glucosamine residues in a peptidoglycan and between N-acetyl-D-glucosamine residues in chitodextrins.. Functionally, lysozymes have primarily a bacteriolytic function; those in tissues and body fluids are associated with the monocyte-macrophage system and enhance the activity of immunoagents. In Phasianus colchicus colchicus (Black-necked pheasant), this protein is Lysozyme C (LYZ).